Consider the following 274-residue polypeptide: Formamidopyrimidine-DNA glycosylase (274 aa).

Residue P2 is the Schiff-base intermediate with DNA of the active site. Residue E3 is the Proton donor of the active site. K60 functions as the Proton donor; for beta-elimination activity in the catalytic mechanism. The DNA site is built by H93 and R112. Residues 240 to 274 (FVYGRKGEPCKRCGTPIEKTVVAGRGTHYCPRCQR) form an FPG-type zinc finger. R264 acts as the Proton donor; for delta-elimination activity in catalysis.

This sequence belongs to the FPG family. In terms of assembly, monomer. The cofactor is Zn(2+).

It catalyses the reaction Hydrolysis of DNA containing ring-opened 7-methylguanine residues, releasing 2,6-diamino-4-hydroxy-5-(N-methyl)formamidopyrimidine.. The enzyme catalyses 2'-deoxyribonucleotide-(2'-deoxyribose 5'-phosphate)-2'-deoxyribonucleotide-DNA = a 3'-end 2'-deoxyribonucleotide-(2,3-dehydro-2,3-deoxyribose 5'-phosphate)-DNA + a 5'-end 5'-phospho-2'-deoxyribonucleoside-DNA + H(+). Involved in base excision repair of DNA damaged by oxidation or by mutagenic agents. Acts as a DNA glycosylase that recognizes and removes damaged bases. Has a preference for oxidized purines, such as 7,8-dihydro-8-oxoguanine (8-oxoG). Has AP (apurinic/apyrimidinic) lyase activity and introduces nicks in the DNA strand. Cleaves the DNA backbone by beta-delta elimination to generate a single-strand break at the site of the removed base with both 3'- and 5'-phosphates. The protein is Formamidopyrimidine-DNA glycosylase of Geobacillus kaustophilus (strain HTA426).